The chain runs to 360 residues: Peptide chain release factor 1 (360 aa).

At Gln235 the chain carries N5-methylglutamine.

The protein belongs to the prokaryotic/mitochondrial release factor family. Post-translationally, methylated by PrmC. Methylation increases the termination efficiency of RF1.

The protein localises to the cytoplasm. Its function is as follows. Peptide chain release factor 1 directs the termination of translation in response to the peptide chain termination codons UAG and UAA. This is Peptide chain release factor 1 from Mannheimia succiniciproducens (strain KCTC 0769BP / MBEL55E).